The following is a 417-amino-acid chain: Gamma-glutamyl phosphate reductase (417 aa).

It belongs to the gamma-glutamyl phosphate reductase family.

It is found in the cytoplasm. It catalyses the reaction L-glutamate 5-semialdehyde + phosphate + NADP(+) = L-glutamyl 5-phosphate + NADPH + H(+). It participates in amino-acid biosynthesis; L-proline biosynthesis; L-glutamate 5-semialdehyde from L-glutamate: step 2/2. Its function is as follows. Catalyzes the NADPH-dependent reduction of L-glutamate 5-phosphate into L-glutamate 5-semialdehyde and phosphate. The product spontaneously undergoes cyclization to form 1-pyrroline-5-carboxylate. This Escherichia coli O6:K15:H31 (strain 536 / UPEC) protein is Gamma-glutamyl phosphate reductase.